Consider the following 245-residue polypeptide: tRNA pseudouridine synthase A (245 aa).

The Nucleophile role is filled by Asp-52. Tyr-111 serves as a coordination point for substrate.

It belongs to the tRNA pseudouridine synthase TruA family. As to quaternary structure, homodimer.

The catalysed reaction is uridine(38/39/40) in tRNA = pseudouridine(38/39/40) in tRNA. Formation of pseudouridine at positions 38, 39 and 40 in the anticodon stem and loop of transfer RNAs. This is tRNA pseudouridine synthase A from Wolbachia pipientis subsp. Culex pipiens (strain wPip).